We begin with the raw amino-acid sequence, 97 residues long: MRPLLCALTGLALLRAAGSLAAAEPFSPPRGDSAQSTACDRHMAVQRRLDVMEEMVEKTVDHLGTEVKGLLGLLEELAWNLPPGPFSPAPDLLGDGF.

The N-terminal stretch at 1–22 (MRPLLCALTGLALLRAAGSLAA) is a signal peptide.

This sequence belongs to the PLAC9 family.

The protein resides in the secreted. The sequence is that of Placenta-specific protein 9 (PLAC9) from Homo sapiens (Human).